Consider the following 465-residue polypeptide: Kynureninase (465 aa).

Pyridoxal 5'-phosphate is bound by residues Leu-133, Thr-134, 161 to 164 (FPSD), Ser-217, Asp-246, His-249, and Tyr-271. Lys-272 is modified (N6-(pyridoxal phosphate)lysine). Residues Trp-302 and Asn-330 each contribute to the pyridoxal 5'-phosphate site.

This sequence belongs to the kynureninase family. As to quaternary structure, homodimer. It depends on pyridoxal 5'-phosphate as a cofactor.

It localises to the cytoplasm. It catalyses the reaction L-kynurenine + H2O = anthranilate + L-alanine + H(+). The catalysed reaction is 3-hydroxy-L-kynurenine + H2O = 3-hydroxyanthranilate + L-alanine + H(+). It participates in amino-acid degradation; L-kynurenine degradation; L-alanine and anthranilate from L-kynurenine: step 1/1. The protein operates within cofactor biosynthesis; NAD(+) biosynthesis; quinolinate from L-kynurenine: step 2/3. Its function is as follows. Catalyzes the cleavage of L-kynurenine (L-Kyn) and L-3-hydroxykynurenine (L-3OHKyn) into anthranilic acid (AA) and 3-hydroxyanthranilic acid (3-OHAA), respectively. This is Kynureninase from Nematostella vectensis (Starlet sea anemone).